A 506-amino-acid chain; its full sequence is Maturase K (506 aa).

It belongs to the intron maturase 2 family. MatK subfamily.

The protein resides in the plastid. The protein localises to the chloroplast. In terms of biological role, usually encoded in the trnK tRNA gene intron. Probably assists in splicing its own and other chloroplast group II introns. In Mentzelia lindleyi (Blazing star), this protein is Maturase K.